The following is a 434-amino-acid chain: MVVKFTKSEALHKEALEHIVGGVNSPSRSFKAVGGGAPIAMERGKGAYFWDVDGNKYIDYLAAYGPIITGHAHPHITKAITTAAENGVLYGTPTALEVKFAKMLKEAMPALDKVRFVNSGTEAVMTTIRVARAYTGRTKIMKFAGCYHGHSDLVLVAAGSGPSTLGTPDSAGVPQSIAQEVITVPFNNVETLKEALDKWGHEVAAILVEPIVGNFGIVEPKPGFLEKVNELVHEAGALVIYDEVITAFRFMYGGAQDLLGVTPDLTALGKVIGGGLPIGAYGGKKEIMEQVAPLGPAYQAGTMAGNPASMASGIACLEVLQQEGLYEKLDELGAMLEKGILEQAAKHNIDITLNRLKGALTVYFTTNTIEDYDAAQNTDGEMFGKFFKLMLQEGVNLAPSKYEAWFLTTEHTKEDIEYTIEAVGRAFAALADNK.

Residue lysine 270 is modified to N6-(pyridoxal phosphate)lysine.

It belongs to the class-III pyridoxal-phosphate-dependent aminotransferase family. HemL subfamily. Homodimer. Requires pyridoxal 5'-phosphate as cofactor.

It is found in the cytoplasm. It carries out the reaction (S)-4-amino-5-oxopentanoate = 5-aminolevulinate. It functions in the pathway porphyrin-containing compound metabolism; protoporphyrin-IX biosynthesis; 5-aminolevulinate from L-glutamyl-tRNA(Glu): step 2/2. This chain is Glutamate-1-semialdehyde 2,1-aminomutase 1, found in Bacillus anthracis (strain CDC 684 / NRRL 3495).